Here is a 150-residue protein sequence, read N- to C-terminus: D-aminoacyl-tRNA deacylase (150 aa).

A Gly-cisPro motif, important for rejection of L-amino acids motif is present at residues 138–139; the sequence is GP.

This sequence belongs to the DTD family. As to quaternary structure, homodimer.

The protein localises to the cytoplasm. It catalyses the reaction glycyl-tRNA(Ala) + H2O = tRNA(Ala) + glycine + H(+). The enzyme catalyses a D-aminoacyl-tRNA + H2O = a tRNA + a D-alpha-amino acid + H(+). Its function is as follows. An aminoacyl-tRNA editing enzyme that deacylates mischarged D-aminoacyl-tRNAs. Also deacylates mischarged glycyl-tRNA(Ala), protecting cells against glycine mischarging by AlaRS. Acts via tRNA-based rather than protein-based catalysis; rejects L-amino acids rather than detecting D-amino acids in the active site. By recycling D-aminoacyl-tRNA to D-amino acids and free tRNA molecules, this enzyme counteracts the toxicity associated with the formation of D-aminoacyl-tRNA entities in vivo and helps enforce protein L-homochirality. The protein is D-aminoacyl-tRNA deacylase of Sorangium cellulosum (strain So ce56) (Polyangium cellulosum (strain So ce56)).